A 213-amino-acid polypeptide reads, in one-letter code: Ethylene-responsive transcription factor WIN1 (213 aa).

A DNA-binding region (AP2/ERF) is located at residues 15–72; the sequence is KFRGVRQRHWGSWVSEIRHPLLKRRVWLGTFETAEEAARAYDEAAVLMSGRNAKTNFP. Polar residues predominate over residues 70–80; sequence NFPIQRSSTGE. Disordered stretches follow at residues 70–99 and 159–213; these read NFPI…GSST and ASTD…RFII. The span at 159–174 shows a compositional bias: low complexity; it reads ASTDAASQSTSATTAP.

The protein belongs to the AP2/ERF transcription factor family. ERF subfamily. Mostly expressed in roots, stems and anthers, and, to a lower extent, in leaves, seeds and silks.

It localises to the nucleus. Promotes cuticle formation by inducing the expression of enzymes involved in wax biosynthesis, particularly promoting very-long-chain waxes formation. Confers drought resistance. Acts as a transcriptional activator binding directly to promoter regions of CER2, CER3.2 and KCS1, wax biosynthesis-related genes. Binds to the GCC-box pathogenesis-related promoter element. May be involved in the regulation of gene expression by stress factors and by components of stress signal transduction pathways. This Zea mays (Maize) protein is Ethylene-responsive transcription factor WIN1.